The following is a 309-amino-acid chain: Short-chain dehydrogenase/reductase ARMGADRAFT_1048226 (309 aa).

NADP(+) is bound by residues Lys-64, Asp-86, Asn-113, and Lys-145. Residue Ser-167 is the Proton donor of the active site. 2 residues coordinate NADP(+): Tyr-196 and Lys-200. Tyr-196 (proton acceptor) is an active-site residue. The active-site Lowers pKa of active site Tyr is Lys-200.

The protein belongs to the short-chain dehydrogenases/reductases (SDR) family.

The protein operates within secondary metabolite biosynthesis. Its function is as follows. Short-chain dehydrogenase/reductase, part of the gene cluster that mediates the biosynthesis of melleolides, a range of antifungal and phytotoxic polyketide derivatives composed of an orsellinic acid (OA) moiety esterified to various sesquiterpene alcohols. The first step in melleolides biosynthesis is performed by the delta(6)-protoilludene synthase PRO1 which catalyzes the cyclization of farnesyl diphosphate to protoilludene. The orsellinic acid synthase armB produces OA by condensing acetyl-CoA with 3 malonyl-CoA units in a three-round chain elongation reaction folowed by a C2-C7 ring closure. ArmB further catalyzes the trans-esterification of OA to the various sesquiterpene alcohols resulting from the hydroxylation of protoilludene. The melleolides cluster also includes 5 cytochrome P450 monooxygenases, 4 NAD(+)-dependent oxidoreductases, one flavin-dependent oxidoreductase, and one O-methyltransferase. The cytochrome P450 monooxygenases may be involved in protoilludene hydroxylation to elaborate melleolides with multiple alcohol groups, such as melleolide D, which carries alcohol functionalities at C-4, C-5, C-10, and C-13. The role of the NAD(+)-dependent enzymes remains unknown. Numerous melleolides, including arnamial, show 5'-O-methylation of the aromatic moiety which may be catalyzed by the methyltransferase encoded in the cluster. The flavin-dependent oxidoreductase might represent the dehydrogenase yielding the aldehyde in position 1 of arnamial and other melleolides. Finally, several halogenase localized outside of the cluster, are able to catalyze the transfer of a single chlorine atom to the melleolide backbone, resulting in a 6'-chloromelleolide product. This Armillaria gallica (Bulbous honey fungus) protein is Short-chain dehydrogenase/reductase ARMGADRAFT_1048226.